The chain runs to 284 residues: MCPCPYMHQAKPQQWHDAKLDFAESMSYGDYLGLDKVLDAQVPRSQQHNEMLFIIQHQASELWMKLLLHELRHARQLIDQGQLAGSHRVLARVLRIMEQMVSSWAILATLSPMEFISFRSDLGNASGFQSYQYREIEFIFGNKNRAMLLPHQHTPQIAKNLEQCLHTPSLYDAIIQQMTRQDLPICALRLDADPSEPTRSDASVEAAWVQVYRQPERYWDLYQLGEKLMDIEDAFRQWRFRHVTVVERVIGFKKGTGGTEGVEYLRKMLGTVLFPELWSLRSSL.

Residues 53–57 (FIIQH) and arginine 119 contribute to the substrate site. Histidine 242 contacts heme. Residue threonine 256 coordinates substrate.

The protein belongs to the tryptophan 2,3-dioxygenase family. In terms of assembly, homotetramer. It depends on heme as a cofactor.

The catalysed reaction is L-tryptophan + O2 = N-formyl-L-kynurenine. The protein operates within amino-acid degradation; L-tryptophan degradation via kynurenine pathway; L-kynurenine from L-tryptophan: step 1/2. It participates in siderophore biosynthesis; quinolobactin biosynthesis. Its function is as follows. Heme-dependent dioxygenase that catalyzes the oxidative cleavage of the L-tryptophan (L-Trp) pyrrole ring and converts L-tryptophan to N-formyl-L-kynurenine. Catalyzes the oxidative cleavage of the indole moiety. Required for synthesis of the siderophore quinolobactin. The sequence is that of Tryptophan 2,3-dioxygenase from Pseudomonas fluorescens.